Reading from the N-terminus, the 224-residue chain is UPF0758 protein PSPTO_0086 (224 aa).

The MPN domain maps to 102 to 224 (ALENPAQVRN…PLSMVEKGLM (123 aa)). Zn(2+)-binding residues include histidine 173, histidine 175, and aspartate 186. The short motif at 173–186 (HNHPSGITTPSRSD) is the JAMM motif element.

It belongs to the UPF0758 family.

The chain is UPF0758 protein PSPTO_0086 from Pseudomonas syringae pv. tomato (strain ATCC BAA-871 / DC3000).